Here is a 3106-residue protein sequence, read N- to C-terminus: MVQNTDNTRNSKLIRDRNDYDDNDDVDSGDIAVIGIGLRFPSGNLKESISKPNQLFNELLNGLDGIVTTSERWSDNYYLNGEIVSKFAGLLPLDEWKQFDPIFFAINPSNDNVSSIDPQQRLLLKCVWEALEDSGIDPISLRGTNTSTFIGSSTIDYSILQRSPFETQNNIFGSTTHSVANRIGYCFDFRGENLTIDTACSSSSNAINCGYNSIKSNKSNVSIVGGVNFLLDPHLSKSFTQLGLLSPTGRCHTFSSDADGYVRSEGVGIVVLKKLKDAIKDSNNIYCVIKGSSSNIDGNFDKLNFYSPSKSSQCENIKLAIKSTNGQINESDIDYCETHGTGTPTGDPIELEGISRVFNNIASTTTNNNNKQVLVGSIKSNIGHTEACSGVASLIKCCLMFKNKLFLQNINFKEPNPLINFKEWGLKVVTEPIKFNENKPTVMLINNFGITGSNVCLILSEFENNHNDYHKMEIDNKLSEEKKKYLIPLSSNSSTSLNNYKSSIIKHSNSSTTTTTTSFKEFVYNQIKFKSTSLIQKSVIIASDWNEFQDENNQIKLNNSDNLISNITVEKKKSPITVMVLCGQGSQYNKMALSLYDNEPIFRESVNRFDKELFKYYGYSVLDKLRSIDDKDLISIHQPILAQPANVMIQVSLYELYKHWGVSADIIIGHSLGEVSSPYCSGMIDFQTLCYLTYHRSVAQNRTTGTGRMLSVNISSDEFINKYQSTTKYKSLEIACYNSPTSIVIAGKEDLLNEITKEFKSNDIFCSMLGSLSSFHTSSQQMIKDEVCSLNISSKQPSIAVFSTVTTNLFNHQSSPFNANYVFDNIIQPVYFTQTITNLYKHIESNDMGNEITFIEVSPHPTLQYYLNQMKSTQSSYFNNGKNITIYSPLNKKKNDYNEFLKTISLLYVKNNFDINFKSQLINNNNNNYSNQLNNLPLYQWDDKEYFKLNSLLEKIKSEGPSIHGLGNNTDSPNPSYQTFIDIKKSPFQWLKGHQVSDKFYYPGMGYVHNLLSIYPNQDITISSLEFKSPLVLTEGNRQCLQTTIAPLSKNEFNIKSYYKDQKTNQWILTSLGNFSLTKHNSIISNKLINIQSLKDKCNFTSISKQDFYETIRIKTNLTYKGLFQGVKQCHIGNNCSLAIVSLNEIYNQKEYNHLINNSNMNTFLNTAILDTCLHGSLVAVTQPVVLDKIEGFKYYSSNIPSLNKNNNNNDDNDDDIKELYVFSDIKPRTNSQTYSISVKIILPNGTLLVDISNVVCALVSLDSNPDSTIICEPPSNNIYTPYLQSKDSVINKPEQFKHLYRVDEFSVKEEDNQFLSNESLLSLFYKHINNRCPSINLESLTTLEYNQFKQLYYNSSANENLFKFIFENLKKYSNIVNLDNDHSNIKSKNEELFIRTTKIMAKQLFPLKDDDSITDTPQSLFESGYLDDFYKNSRVVQPLNSLLSEIIVETLKPILNEPIVFRILEAGGGTGSLSLLILEKICKLLNNNSTTSIINIEFTWSDISASFFAEIKEKFSSFTNRNNLNIIYRVLDLEKPLLDQDLKASYYDFVVMSNVMHVVKKLKPTLNEIHNILTPNGQLLLIEPPHKSFIYDSVFGCFSQWWPSSDSDIELRPDRCCMKQEKWINLLNQCNYRDTIMSGNDNLLFLIQTRKPTINEIISEQSISLDQLNSFNNIILFSNNNNNNNNNNSDNNRNSCSSILDSITLNQELKHKIININNFNEFQSWITNNQTKDDCNKTLIIFLKSIESIMNTSNFKEITFEYIQINQLILKLELSNNFKHLLLSLNSSTDNYLSSSIVGAARYFVEFPQLDLLTLNYDNVSIENNQQLSLINYLINPNNNIQKEFTINNNRVYYERYCRRSNNIKSKLQSKSFENNKDNLCIQLNSNLEYQLYSKKDKLNSNEVEIEIKATGMNYKDYLMYIGMIGTNLDIKYGKEIENCIGFNNPKIGKDFSGIITRLGSNVKKFKVGDQVCGVGSKTSSSHIIVDYDYIYYKPLNYSHSVSALIPSVYITSLHSLYGIGSLKSNESILIHSAAGGVGISSLDLLKSKQHQGYIFLTVGSKDKEEYLINKYGSLITAIYSSRNKDYVYEIKNKLIELGVVEQHQQGVDLILNTLSSEYMDSNFQCLNLSGRIVDLSIIHLTSNDYMTNNHYKFNMNYGNVYVEDFTSKLIKSYLKKIIKMINSNKLELSVPIIEYSNNQFKDAIEYINQRKHIGKIIVNHNQDEFNRVYNNYQSNNNQIILKHSYDISKLNIGKNILLTGQTGIVLEILKYLVKYSNDSIENIIILSKSKLKWELELLINQSKFKKDNNIKFHFNQIDIEDSNKVNQVLNQLELNENITNIDSIIHFAFMNDIGDVQQVDMNRLNNTHGAKTIGAINLHNQSINRSWNIKQFIMASSVVSILGSDQQCCYVSACSVIDSLSKYRHSIGLPSLAINLGAISSTGFVSRNNAIETMFKSSILKLFSPQLVISSLDLFIQNQHQYPNYCLSDFNFEILPSTLTNQYHSKFDFEINIVKKSNQIKSFTGSNDGDNNNEIIRSTILNKICELLSIDESKINEDLQLTQYGMDSLVIVQLKNFIDNQLGHNIITIQQLQNNKINQSIEIILSAHNNNNKNNNNNNNINNNNKNNNNNNNKNNNNINNNINNNKNNNNNNNLVKKEQQSLDEFIKNEMKLNESIISRPYSIKNILNKSNNSKSIFLTGSTGFLGAYLLTELIKMNNISKIYCLIRNNSKLTNPIDVIINNLKKHQLINMNKESPNQRLTKIINHTGNISNDKLSNIENSEYYKQISEDQLIKIIPMIGDISKDKFGLTEQDYLKLSNECDIIINSAADLNLKSNYEESKTVNVNSVNQIVKLSVSNNSSQKLIVHFSSIAVFINHPFKDGEEFEETNILPNFDTTPIGYIQCKVISEKLLTNAAESRGIPSIIIRPPDIFSNPITGIGHSNDFVSLLLKTSKEIGYYPNIYKSIFTTPVTTIAKTTIDLIFNENSWNQNKSKPISIYSLNGNSIEMKSIYKFLENNYNCKEIDYQEWIELVSKSNGMSSKRYSTFHIHDNQNLMVSNFKINSLFKMSNSTKELLTSIGSYNHQDWEINESIILKNINNNNN.

The span at 1-11 shows a compositional bias: polar residues; the sequence is MVQNTDNTRNS. Positions 1-20 are disordered; that stretch reads MVQNTDNTRNSKLIRDRNDY. Residues 28-461 enclose the Ketosynthase family 3 (KS3) domain; that stretch reads SGDIAVIGIG…GSNVCLILSE (434 aa). Residues C200, H339, and H384 each act as for beta-ketoacyl synthase activity in the active site. The interval 661-694 is acyl/malonyl transferase; that stretch reads GVSADIIIGHSLGEVSSPYCSGMIDFQTLCYLTY. S671 functions as the For acyl/malonyl transferase activity in the catalytic mechanism. Residues 961-1082 are N-terminal hotdog fold; sequence PSIHGLGNNT…GNFSLTKHNS (122 aa). Residues 961–1266 enclose the PKS/mFAS DH domain; that stretch reads PSIHGLGNNT…CALVSLDSNP (306 aa). Catalysis depends on H994, which acts as the Proton acceptor; for dehydratase activity. The segment at 1099-1266 is C-terminal hotdog fold; it reads NFTSISKQDF…CALVSLDSNP (168 aa). D1171 acts as the Proton donor; for dehydratase activity in catalysis. Residues 2533-2610 form the Carrier domain; that stretch reads NNNEIIRSTI…QSIEIILSAH (78 aa). Residue S2570 is modified to O-(pantetheine 4'-phosphoryl)serine. Residues 2609–2656 adopt a coiled-coil conformation; the sequence is AHNNNNKNNNNNNNINNNNKNNNNNNNKNNNNINNNINNNKNNNNNNN. The interval 2614–2656 is disordered; the sequence is NKNNNNNNNINNNNKNNNNNNNKNNNNINNNINNNKNNNNNNN.

Pantetheine 4'-phosphate serves as cofactor.

In terms of biological role, probable polyketide synthase. The sequence is that of Probable polyketide synthase 29 (pks29) from Dictyostelium discoideum (Social amoeba).